Here is a 349-residue protein sequence, read N- to C-terminus: sn-glycerol-3-phosphate import ATP-binding protein UgpC (349 aa).

One can recognise an ABC transporter domain in the interval 4–235 (ITLKDVHKTY…PATAFVATFI (232 aa)). An ATP-binding site is contributed by 37–44 (GPSGCGKS).

Belongs to the ABC transporter superfamily. sn-glycerol-3-phosphate importer (TC 3.A.1.1.3) family. The complex is composed of two ATP-binding proteins (UgpC), two transmembrane proteins (UgpA and UgpE) and a solute-binding protein (UgpB).

The protein localises to the cell inner membrane. It catalyses the reaction sn-glycerol 3-phosphate(out) + ATP + H2O = sn-glycerol 3-phosphate(in) + ADP + phosphate + H(+). Part of the ABC transporter complex UgpBAEC involved in sn-glycerol-3-phosphate (G3P) import. Responsible for energy coupling to the transport system. The chain is sn-glycerol-3-phosphate import ATP-binding protein UgpC from Rhizobium meliloti (strain 1021) (Ensifer meliloti).